The sequence spans 492 residues: Catalase-1 (492 aa).

Residues His-65 and Asn-138 contribute to the active site. Tyr-348 is a heme binding site.

It belongs to the catalase family. As to quaternary structure, homotetramer and heterotetramer. At least six or seven isozymes are produced from a mixture of 3 gene products. Interacts with NCA1. Interacts with LSD1. The cofactor is heme.

The protein resides in the cytoplasm. It catalyses the reaction 2 H2O2 = O2 + 2 H2O. Occurs in almost all aerobically respiring organisms and serves to protect cells from the toxic effects of hydrogen peroxide. This chain is Catalase-1 (CAT1), found in Arabidopsis thaliana (Mouse-ear cress).